The chain runs to 118 residues: Large ribosomal subunit protein uL18 (118 aa).

It belongs to the universal ribosomal protein uL18 family. As to quaternary structure, part of the 50S ribosomal subunit; part of the 5S rRNA/L5/L18/L25 subcomplex. Contacts the 5S and 23S rRNAs.

In terms of biological role, this is one of the proteins that bind and probably mediate the attachment of the 5S RNA into the large ribosomal subunit, where it forms part of the central protuberance. The protein is Large ribosomal subunit protein uL18 of Brachyspira hyodysenteriae (strain ATCC 49526 / WA1).